Here is a 638-residue protein sequence, read N- to C-terminus: 1-deoxy-D-xylulose-5-phosphate synthase (638 aa).

Residues H79 and 120-122 (GHS) contribute to the thiamine diphosphate site. D151 contacts Mg(2+). Residues 152–153 (GA), N182, Y291, and E373 contribute to the thiamine diphosphate site. Mg(2+) is bound at residue N182.

Belongs to the transketolase family. DXPS subfamily. In terms of assembly, homodimer. Mg(2+) serves as cofactor. The cofactor is thiamine diphosphate.

It catalyses the reaction D-glyceraldehyde 3-phosphate + pyruvate + H(+) = 1-deoxy-D-xylulose 5-phosphate + CO2. It functions in the pathway metabolic intermediate biosynthesis; 1-deoxy-D-xylulose 5-phosphate biosynthesis; 1-deoxy-D-xylulose 5-phosphate from D-glyceraldehyde 3-phosphate and pyruvate: step 1/1. Catalyzes the acyloin condensation reaction between C atoms 2 and 3 of pyruvate and glyceraldehyde 3-phosphate to yield 1-deoxy-D-xylulose-5-phosphate (DXP). In Xanthomonas campestris pv. campestris (strain 8004), this protein is 1-deoxy-D-xylulose-5-phosphate synthase.